The following is a 432-amino-acid chain: 3-phosphoshikimate 1-carboxyvinyltransferase (432 aa).

3-phosphoshikimate-binding residues include K23, S24, and R28. K23 contributes to the phosphoenolpyruvate binding site. Residues G95 and R123 each contribute to the phosphoenolpyruvate site. Residues S167, Q169, D317, and K344 each contribute to the 3-phosphoshikimate site. Phosphoenolpyruvate is bound at residue Q169. D317 acts as the Proton acceptor in catalysis. 2 residues coordinate phosphoenolpyruvate: R348 and R390.

The protein belongs to the EPSP synthase family. As to quaternary structure, monomer.

The protein resides in the cytoplasm. It catalyses the reaction 3-phosphoshikimate + phosphoenolpyruvate = 5-O-(1-carboxyvinyl)-3-phosphoshikimate + phosphate. Its pathway is metabolic intermediate biosynthesis; chorismate biosynthesis; chorismate from D-erythrose 4-phosphate and phosphoenolpyruvate: step 6/7. In terms of biological role, catalyzes the transfer of the enolpyruvyl moiety of phosphoenolpyruvate (PEP) to the 5-hydroxyl of shikimate-3-phosphate (S3P) to produce enolpyruvyl shikimate-3-phosphate and inorganic phosphate. In Staphylococcus saprophyticus subsp. saprophyticus (strain ATCC 15305 / DSM 20229 / NCIMB 8711 / NCTC 7292 / S-41), this protein is 3-phosphoshikimate 1-carboxyvinyltransferase.